Here is a 20-residue protein sequence, read N- to C-terminus: Protein PR-L6 (20 aa).

It belongs to the BetVI family.

In Lupinus luteus (European yellow lupine), this protein is Protein PR-L6.